A 161-amino-acid chain; its full sequence is Arachidonate 5-lipoxygenase-activating protein (161 aa).

Topologically, residues Met-1–Asn-8 are lumenal. The chain crosses the membrane as a helical span at residues Val-9 to Val-30. Over Glu-31–Arg-52 the chain is Cytoplasmic. Residues Val-53 to Leu-77 traverse the membrane as a helical segment. The Lumenal segment spans residues Cys-78–Gln-80. Residues Val-81–Leu-102 traverse the membrane as a helical segment. The Cytoplasmic segment spans residues Gly-103–Gln-107. Residues Ser-108–Gly-115 lie within the membrane without spanning it. A helical transmembrane segment spans residues Lys-116 to Ala-128. The Lumenal portion of the chain corresponds to Gly-129–Pro-161.

This sequence belongs to the MAPEG family. In terms of assembly, homotrimer. Interacts with LTC4S and ALOX5.

The protein localises to the nucleus membrane. It localises to the endoplasmic reticulum membrane. In terms of biological role, required for leukotriene biosynthesis by ALOX5 (5-lipoxygenase). Anchors ALOX5 to the membrane. Binds arachidonic acid, and could play an essential role in the transfer of arachidonic acid to ALOX5. Binds to MK-886, a compound that blocks the biosynthesis of leukotrienes. The polypeptide is Arachidonate 5-lipoxygenase-activating protein (Alox5ap) (Mus musculus (Mouse)).